Reading from the N-terminus, the 277-residue chain is Thymidylate synthase (277 aa).

A dUMP-binding site is contributed by Arg21. Residue His51 coordinates (6R)-5,10-methylene-5,6,7,8-tetrahydrofolate. 126–127 (RR) is a dUMP binding site. The Nucleophile role is filled by Cys159. Residues 179 to 182 (RSAD), Asn190, and 220 to 222 (HLY) contribute to the dUMP site. Asp182 provides a ligand contact to (6R)-5,10-methylene-5,6,7,8-tetrahydrofolate. (6R)-5,10-methylene-5,6,7,8-tetrahydrofolate is bound at residue Ser276.

This sequence belongs to the thymidylate synthase family. Bacterial-type ThyA subfamily. As to quaternary structure, homodimer.

The protein localises to the cytoplasm. The catalysed reaction is dUMP + (6R)-5,10-methylene-5,6,7,8-tetrahydrofolate = 7,8-dihydrofolate + dTMP. It functions in the pathway pyrimidine metabolism; dTTP biosynthesis. Functionally, catalyzes the reductive methylation of 2'-deoxyuridine-5'-monophosphate (dUMP) to 2'-deoxythymidine-5'-monophosphate (dTMP) while utilizing 5,10-methylenetetrahydrofolate (mTHF) as the methyl donor and reductant in the reaction, yielding dihydrofolate (DHF) as a by-product. This enzymatic reaction provides an intracellular de novo source of dTMP, an essential precursor for DNA biosynthesis. The polypeptide is Thymidylate synthase (Hydrogenovibrio crunogenus (strain DSM 25203 / XCL-2) (Thiomicrospira crunogena)).